The primary structure comprises 2136 residues: U5 small nuclear ribonucleoprotein 200 kDa helicase (2136 aa).

2 positions are modified to phosphoserine: Ser17 and Ser26. Lys46 is covalently cross-linked (Glycyl lysine isopeptide (Lys-Gly) (interchain with G-Cter in SUMO2)). The segment at 50 to 80 (TRMGDKAQRTKPQMQEERRAKRRKRDEDRHD) is disordered. Positions 54–84 (DKAQRTKPQMQEERRAKRRKRDEDRHDINKM) form a coiled coil. A Phosphoserine modification is found at Ser225. Phosphothreonine is present on Thr389. Positions 395–2129 (DLDQGGEALA…YKFSVDVKEA (1735 aa)) are interaction with C9orf78 and WBP4. The region spanning 490 to 673 (RAALETDENL…FLRVDPAKGL (184 aa)) is the Helicase ATP-binding 1 domain. Position 503 to 510 (503 to 510 (APTGAGKT)) interacts with ATP. Residues 615–618 (DEIH) carry the DEIH box motif. Positions 684–921 (PLEQTYVGIT…NAKDAVNWLG (238 aa)) constitute a Helicase C-terminal 1 domain. The residue at position 709 (Tyr709) is a Phosphotyrosine. N6-acetyllysine is present on Lys971. One can recognise an SEC63 1 domain in the interval 981–1286 (VTELGRIASH…SCETQLPVSF (306 aa)). Residues 1282 to 2136 (LPVSFRHLIL…KEAETDSDSD (855 aa)) are interaction with TSSC4. The 176-residue stretch at 1337–1512 (NTVYNSDDNV…WLGCSATSTF (176 aa)) folds into the Helicase ATP-binding 2 domain. 1350–1357 (APTGSGKT) provides a ligand contact to ATP. At Thr1428 the chain carries Phosphothreonine. Positions 1454 to 1457 (DEVH) match the DEVH box motif. The 209-residue stretch at 1545–1753 (PVYHAITKHS…TIENKQDAVD (209 aa)) folds into the Helicase C-terminal 2 domain. Residue Thr1765 is modified to Phosphothreonine. Positions 1812–2124 (PLNLGMIAAY…GCDQEYKFSV (313 aa)) constitute an SEC63 2 domain. Residue Ser2002 is modified to Phosphoserine. Thr2131 bears the Phosphothreonine mark. Residues Ser2133 and Ser2135 each carry the phosphoserine modification.

Belongs to the helicase family. SKI2 subfamily. Component of a core complex containing at least PRPF8, SNRNP200, EFTUD2 and SNRNP40. Component of the U5 snRNP and U4/U6-U5 tri-snRNP complexes, building blocks of the spliceosome. Component of the U4/U6-U5 tri-snRNP complex composed of the U4, U6 and U5 snRNAs and at least PRPF3, PRPF4, PRPF6, PRPF8, PRPF31, SNRNP200, TXNL4A, SNRNP40, DDX23, CD2BP2, PPIH, SNU13, EFTUD2, SART1 and USP39. Component of precatalytic, catalytic and postcatalytic spliceosomal complexes. Component of the minor spliceosome, which splices U12-type introns. Interacts with C9orf78; the interaction is direct and mutually exclusive with its interaction with WBP4. Interacts with WBP4; the interaction is mutually exclusive with its interaction with C9orf78. Interacts with PRPF8. Interacts with TSSC4; the interaction is direct, excludes recruitment of C9ORF78 and WBP4 to SNRNP200 and negatively regulates its RNA helicase activity. In terms of tissue distribution, widely expressed.

It is found in the nucleus. It catalyses the reaction ATP + H2O = ADP + phosphate + H(+). Catalyzes the ATP-dependent unwinding of U4/U6 RNA duplices, an essential step in the assembly of a catalytically active spliceosome. Plays a role in pre-mRNA splicing as a core component of precatalytic, catalytic and postcatalytic spliceosomal complexes. As a component of the minor spliceosome, involved in the splicing of U12-type introns in pre-mRNAs. Involved in spliceosome assembly, activation and disassembly. Mediates changes in the dynamic network of RNA-RNA interactions in the spliceosome. In Homo sapiens (Human), this protein is U5 small nuclear ribonucleoprotein 200 kDa helicase (SNRNP200).